The chain runs to 384 residues: GDSL esterase/lipase ENOD8 (384 aa).

Positions 1-31 (MKFMAKIELSRHIPLVTLIVLVLCITPPIFA) are cleaved as a signal peptide. The active-site Nucleophile is the Ser-46. Asn-105, Asn-191, Asn-198, Asn-276, and Asn-330 each carry an N-linked (GlcNAc...) asparagine glycan. Catalysis depends on residues Asp-349 and His-352.

Belongs to the 'GDSL' lipolytic enzyme family. As to expression, expressed in root nodules (at protein level).

The protein localises to the symbiosome. Its function is as follows. Has lipase and esterase activities. Probably involved in root nodule physiology. The polypeptide is GDSL esterase/lipase ENOD8 (Medicago truncatula (Barrel medic)).